Reading from the N-terminus, the 267-residue chain is Distal basal body ring component protein (267 aa).

The first 29 residues, 1 to 29 (MKAFLFAAAATLVITALSAPAFAGTPVTL), serve as a signal peptide directing secretion.

FlaD is a subunit of the flagellar transenvelope basal body.

Its subcellular location is the periplasm. It localises to the bacterial flagellum basal body. Functionally, flaD might be the structural protein of the distal basal body ring P, or it is necessary for the assembly of the P ring. This is Distal basal body ring component protein (flaD) from Caulobacter vibrioides (strain ATCC 19089 / CIP 103742 / CB 15) (Caulobacter crescentus).